A 128-amino-acid polypeptide reads, in one-letter code: Fluoride-specific ion channel FluC (128 aa).

A run of 4 helical transmembrane segments spans residues 5–25 (IVAI…LALA), 35–55 (LGTL…AVVF), 67–87 (LFVI…SVEV), and 96–116 (FGWA…LTAL). Glycine 75 and threonine 78 together coordinate Na(+).

Belongs to the fluoride channel Fluc/FEX (TC 1.A.43) family.

The protein localises to the cell inner membrane. It carries out the reaction fluoride(in) = fluoride(out). Na(+) is not transported, but it plays an essential structural role and its presence is essential for fluoride channel function. Its function is as follows. Fluoride-specific ion channel. Important for reducing fluoride concentration in the cell, thus reducing its toxicity. The sequence is that of Fluoride-specific ion channel FluC from Burkholderia ambifaria (strain MC40-6).